The following is a 478-amino-acid chain: Glycogen synthase (478 aa).

Residue Lys-15 participates in ADP-alpha-D-glucose binding.

This sequence belongs to the glycosyltransferase 1 family. Bacterial/plant glycogen synthase subfamily.

It catalyses the reaction [(1-&gt;4)-alpha-D-glucosyl](n) + ADP-alpha-D-glucose = [(1-&gt;4)-alpha-D-glucosyl](n+1) + ADP + H(+). It participates in glycan biosynthesis; glycogen biosynthesis. Functionally, synthesizes alpha-1,4-glucan chains using ADP-glucose. The sequence is that of Glycogen synthase from Enterobacter sp. (strain 638).